A 246-amino-acid polypeptide reads, in one-letter code: Small ribosomal subunit protein uS2 (246 aa).

Belongs to the universal ribosomal protein uS2 family. In terms of assembly, component of the small ribosomal subunit. Mature ribosomes consist of a small (40S) and a large (60S) subunit. The 40S subunit contains about 33 different proteins and 1 molecule of RNA (18S). The 60S subunit contains about 49 different proteins and 3 molecules of RNA (25S, 5.8S and 5S). Interacts with ribosomal protein S21.

The protein resides in the cytoplasm. Required for the assembly and/or stability of the 40S ribosomal subunit. Required for the processing of the 20S rRNA-precursor to mature 18S rRNA in a late step of the maturation of 40S ribosomal subunits. In Leishmania infantum, this protein is Small ribosomal subunit protein uS2.